An 805-amino-acid polypeptide reads, in one-letter code: N-(5-amino-5-carboxypentanoyl)-L-cysteinyl-D-valine synthase (805 aa).

Residues 783-805 (PDTGGGAVGSTTTGGVRGELREI) form a disordered region.

Belongs to the ATP-dependent AMP-binding enzyme family. It depends on pantetheine 4'-phosphate as a cofactor.

It catalyses the reaction L-2-aminoadipate + L-valine + L-cysteine + 3 ATP + H2O = N-[(5S)-5-amino-5-carboxypentanoyl]-L-cysteinyl-D-valine + 3 AMP + 3 diphosphate + 3 H(+). The protein operates within antibiotic biosynthesis; penicillin G biosynthesis; penicillin G from L-alpha-aminoadipate and L-cysteine and L-valine: step 1/3. Its function is as follows. Each of the constituent amino acids of ACV are activated as aminoacyl-adenylates with peptide bonds formed through the participation of amino acid thioester intermediates. This chain is N-(5-amino-5-carboxypentanoyl)-L-cysteinyl-D-valine synthase (pcbAB), found in Streptomyces clavuligerus.